A 550-amino-acid chain; its full sequence is CTP synthase (550 aa).

An amidoligase domain region spans residues 1–271 (MTRYIFITGG…DAEVLDVFGM (271 aa)). Residue Ser-13 participates in CTP binding. Residue Ser-13 participates in UTP binding. 14 to 19 (SLGKGL) provides a ligand contact to ATP. Tyr-54 is a binding site for L-glutamine. Asp-71 serves as a coordination point for ATP. Mg(2+)-binding residues include Asp-71 and Glu-145. CTP contacts are provided by residues 152-154 (DIE), 192-197 (KTKPTQ), and Lys-228. UTP-binding positions include 192 to 197 (KTKPTQ) and Lys-228. Residues 297–549 (TIAVVGKYTV…IAAAKEQGRL (253 aa)) form the Glutamine amidotransferase type-1 domain. Gly-361 contacts L-glutamine. Cys-388 serves as the catalytic Nucleophile; for glutamine hydrolysis. L-glutamine-binding positions include 389-392 (FGMQ), Glu-412, and Arg-477. Active-site residues include His-522 and Glu-524.

It belongs to the CTP synthase family. As to quaternary structure, homotetramer.

It catalyses the reaction UTP + L-glutamine + ATP + H2O = CTP + L-glutamate + ADP + phosphate + 2 H(+). The enzyme catalyses L-glutamine + H2O = L-glutamate + NH4(+). It carries out the reaction UTP + NH4(+) + ATP = CTP + ADP + phosphate + 2 H(+). It participates in pyrimidine metabolism; CTP biosynthesis via de novo pathway; CTP from UDP: step 2/2. With respect to regulation, allosterically activated by GTP, when glutamine is the substrate; GTP has no effect on the reaction when ammonia is the substrate. The allosteric effector GTP functions by stabilizing the protein conformation that binds the tetrahedral intermediate(s) formed during glutamine hydrolysis. Inhibited by the product CTP, via allosteric rather than competitive inhibition. Catalyzes the ATP-dependent amination of UTP to CTP with either L-glutamine or ammonia as the source of nitrogen. Regulates intracellular CTP levels through interactions with the four ribonucleotide triphosphates. In Caulobacter sp. (strain K31), this protein is CTP synthase.